The sequence spans 479 residues: NADH dehydrogenase [ubiquinone] flavoprotein 1, mitochondrial (479 aa).

103–112 (GRGGAGFPSG) provides a ligand contact to NADH. Residue 216 to 264 (RGAGAYICGEETALIESIEGKQGKPRLKPPFPAMAGLYGCPTTVTNVET) coordinates FMN. [4Fe-4S] cluster is bound by residues Cys-396, Cys-399, Cys-402, and Cys-442.

The protein belongs to the complex I 51 kDa subunit family. In terms of assembly, complex I is composed of about 45 different subunits. This is a component of the flavoprotein-sulfur (FP) fragment of the enzyme. It depends on FMN as a cofactor. Requires [4Fe-4S] cluster as cofactor.

It localises to the mitochondrion inner membrane. It carries out the reaction a ubiquinone + NADH + 5 H(+)(in) = a ubiquinol + NAD(+) + 4 H(+)(out). In terms of biological role, core subunit of the mitochondrial membrane respiratory chain NADH dehydrogenase (Complex I) that is believed to belong to the minimal assembly required for catalysis. Complex I functions in the transfer of electrons from NADH to the respiratory chain. The immediate electron acceptor for the enzyme is believed to be ubiquinone. The chain is NADH dehydrogenase [ubiquinone] flavoprotein 1, mitochondrial (ndufv1) from Dictyostelium discoideum (Social amoeba).